The primary structure comprises 2183 residues: RNA replication polyprotein (2183 aa).

Positions 63–256 (SPHSYRPHSH…YIQPVAGSYL (194 aa)) constitute an Alphavirus-like MT domain. Positions 762 to 853 (FYNQCLVQEY…RISLTFRLTK (92 aa)) constitute a Fe2OG dioxygenase domain. Residues His-780, Asp-782, and His-835 each coordinate Fe cation. Arg-844 is a binding site for 2-oxoglutarate. The disordered stretch occupies residues 883 to 910 (ERRSHQSGGRPAVELEGHEREKVNSDSS). The segment covering 895–906 (VELEGHEREKVN) has biased composition (basic and acidic residues). Positions 1091–1199 (FHSFDVEADG…DNHFKPCMPV (109 aa)) constitute an OTU domain. The region spanning 1198–1288 (PVNGCVIRAI…LEKEHLAHIP (91 aa)) is the Peptidase C23 domain. Residues Cys-1202 and His-1283 contribute to the active site. One can recognise a (+)RNA virus helicase ATP-binding domain in the interval 1349–1520 (KEAQKDLASK…SGRSYKFNIL (172 aa)). 1374 to 1381 (GTFGCGKS) lines the ATP pocket. Residues 1521–1667 (SQRFRNPVFY…TKRACNDDII (147 aa)) enclose the (+)RNA virus helicase C-terminal domain. One can recognise a RdRp catalytic domain in the interval 1961-2068 (GVCTESDYEA…NSRLKVTNRF (108 aa)).

The protein belongs to the potexviruses/carlaviruses RNA replication protein family. It depends on Fe(2+) as a cofactor. Post-translationally, specific enzymatic cleavages by the viral protease yield mature proteins.

The enzyme catalyses ATP + H2O = ADP + phosphate + H(+). It carries out the reaction RNA(n) + a ribonucleoside 5'-triphosphate = RNA(n+1) + diphosphate. RNA-directed RNA polymerase involved in viral RNA replication. Functionally, protease: Thiol protease that cleaves the polyprotein. In Apple stem pitting virus (isolate PA66) (ASPV), this protein is RNA replication polyprotein.